We begin with the raw amino-acid sequence, 88 residues long: UPF0250 protein SO_1163 (88 aa).

Belongs to the UPF0250 family.

The sequence is that of UPF0250 protein SO_1163 from Shewanella oneidensis (strain ATCC 700550 / JCM 31522 / CIP 106686 / LMG 19005 / NCIMB 14063 / MR-1).